Consider the following 437-residue polypeptide: Adenylosuccinate synthetase (437 aa).

Residues 25-31 (GDEGKGK), 53-55 (GHT), and lysine 62 each bind GTP. Aspartate 26 serves as the catalytic Proton acceptor. Mg(2+) contacts are provided by aspartate 26 and glycine 53. Residues 26–29 (DEGK) and 51–54 (NAGH) each bind IMP. The Proton donor role is filled by histidine 54. Threonine 141, arginine 155, asparagine 232, and threonine 247 together coordinate IMP. Residue threonine 307 participates in GTP binding. 307–313 (TTTKRPR) contacts substrate. Position 311 (arginine 311) interacts with IMP. GTP contacts are provided by residues arginine 313, 339-341 (KLD), and 425-427 (GVG).

Belongs to the adenylosuccinate synthetase family. As to quaternary structure, homodimer. The cofactor is Mg(2+).

It localises to the cytoplasm. It carries out the reaction IMP + L-aspartate + GTP = N(6)-(1,2-dicarboxyethyl)-AMP + GDP + phosphate + 2 H(+). It functions in the pathway purine metabolism; AMP biosynthesis via de novo pathway; AMP from IMP: step 1/2. Its function is as follows. Plays an important role in the salvage pathway for purine nucleotide biosynthesis. Catalyzes the first committed step in the biosynthesis of AMP from IMP. This Plasmodium knowlesi (strain H) protein is Adenylosuccinate synthetase.